The sequence spans 1849 residues: MTEVDDGAELLFFDTFSHEDITDINLDLVQFPKPVFITQVRIIPLGARVQADFPGGVRLGATNPSKFDLEFFVNDLGMPGASAFENLGLLRYNQNDCIHLDCSREKIPTDGLVLRGWYSTITLAVYGILTNSVTQPIASPTLPCEPAGPEMCNLSTEAHNVLLQEEVLKDDWAEPIPTELLVPHKAVVVSDYEHDDIEYGLSREHQHYHQHVDEEQREMRRLRRSTHSTDRSPPPPPMRTHTHSESNEREYIRCSRDKGSRDWSRSPEYSSHRSRRKRSDRSRSDADEHKWPRTPPASIDSPIRPRSPDAMDYDDDDSRSHYKMQASRGYRHSSESLHRDRDDEERSGTPQEQFEPILSDDEIIGDDEEDEAEDVAAAAEYERELEFAAAVAPPAIDAFEPWQRPLLVYEGDLAAHLNKELETLRLLFKKLSLQTRCESVTAFSDEHGLSADEREQFVYLGEQLNNQLGYLSQHYKRRNFVLQQFFSHDDAHLRQAANVLQVALSFQAACMQPQPAFKIRHIKLGARMAELLGSNEQLFGHLLQEQDFDLFEAVLSLYKEPYMALSIKLQLLKAVYAMLDTRLGVQNFLSPKTNGYQMVMDFLKTAKLTRTKYALQAIIKKLHLYEALASVQQCCRQIFLDTDASVPETTPDPNRLDVCQKIEFAFQMLMDALTDSQLSYQQPRRFLPVSKKFEVLTDPTAQRSFGNALQSYFVQHSLAEALLVILSNPKEVPASTFLCTLDLMHTLLRSHVGIDYFVDDAFPVTQMIVSILLGLEEVPSQPRVVEAKPEGKEDKPMDDSVEQKPDEGKAAGIRAAEEPKMAPPPVVRKPILRPVLPRLARLGIELSYKVQTRYHLDAITFTAACPEYDTIKIATHMHSIYSQTCDPSGRQHTIEVLGLNNNLKIFMDLIKKEQRLQTQRQLLSSPGTKYKSPVLSYAVDMVDACVRYCEQLDYLIEHGGVILELAKNHETFEPSVSAVLQEMYVYMKPLEAINVFVYDDIMPLVEVIGRSLDYLTTFPGDLIMALRILRFLAISKPRQKSHGTEELKHRFVALQLYAADGVQLLLQIMERLCTHFEQPGIHAPALMTIQGVHCCQIMLPTLQILRELLSYAILCRDGTYKDLTAIDHLVKVYYLLYYYPSRCQAGAEVEQCKLEVVKSLLAYTQPHEQDAESLHKSLWTLMVREVLKNIDGPAHFIPGLKLLAELLPLPLPMPQPLCDQLKQQHKQRLIIERKLWSAHLHPQSGQIAKLVEALAPSSFPQLAELLQRVCMQLSDLAPNMTLLIAKTITELLCTEYQTSNCIPTTNLERLLRFSTRLCAFAPLKSSMLSILSGKFWELFQSLLALNEFNEVVTNCQEAVHRILDSFLDSGISLISHKSTAQPALNLSAALPPKELIPRIIDAVFSNLTSVEVTHGISILAVRNLVILTEHDFTFYHLAQLLKQKLTEFQAWMERVILHNETVEYHANIESLILLLRSLTQIEPPPPMCAMPNRTLKLGAMELAQLVEFQDIDMARPPVLARILRVLEKYKLLANEAALCDLKQLIVLHASRQEAMGSASMETPAVETENDGANPAASCSTSSSGGSLNVEPFLPQAEGIVTQYDARPIFTRYCATAENPQLTARYWLEPLPIELIEDMNEPLYERIACDLTDLANVCLNPDLATSGESKRTLNLSGSPQSNREMTPTAPCFRTRRVEVEPATGRPEKKMFLSSVRGRGFARPPPSRGDLFRSRPPNTSRPPSLHVDDFLALETCGAQPTGPTGYNKIPSMLRGSRVGRNRGSRISAAAAFRQKKMMRIGSPSSWTESGGGSYRSTSESHFGGSDSHYSSPHYSGRSRGRGLRSRPPYLR.

Basic and acidic residues-rich tracts occupy residues 206-219 (QHYHQHVDEEQREM), 242-265 (THSESNEREYIRCSRDKGSRDWSR), 281-291 (RSRSDADEHKW), 332-347 (HSSESLHRDRDDEERS), and 785-818 (VEAKPEGKEDKPMDDSVEQKPDEGKAAGIRAAEE). 6 disordered regions span residues 206-364 (QHYH…DEII), 783-818 (RVVEAKPEGKEDKPMDDSVEQKPDEGKAAGIRAAEE), 1557-1584 (SASMETPAVETENDGANPAASCSTSSSG), 1666-1686 (GESKRTLNLSGSPQSNREMTP), 1715-1782 (RGRG…NRGS), and 1798-1849 (IGSP…PYLR). Polar residues predominate over residues 1671 to 1684 (TLNLSGSPQSNREM). Residues 1732–1742 (SRPPNTSRPPS) are compositionally biased toward low complexity. Residues 1800 to 1818 (SPSSWTESGGGSYRSTSES) show a composition bias toward polar residues.

Belongs to the vir family. As to quaternary structure, component of the WMM complex, a N6-methyltransferase complex composed of a catalytic subcomplex, named MAC, and of an associated subcomplex, named MACOM. The MAC subcomplex is composed of Ime4/Mettl3 and Mettl14. The MACOM subcomplex is composed of fl(2)d, Flacc/Xio, Hakai, vir, and, in some cases of nito. Part of a complex containing fl(2)d, Sxl and vir.

The protein resides in the nucleus. Functionally, associated component of the WMM complex, a complex that mediates N6-methyladenosine (m6A) methylation of mRNAs, a modification that plays a role in the efficiency of mRNA splicing and is required for sex determination. Required for sex determination and dosage compensation via Sxl alternative splicing: m6A methylation acts as a key regulator of Sxl pre-mRNA and promotes female-specific alternative splicing of Sxl, which determines female physiognomy. M6A methylation is also required for neuronal functions. Required for proper inclusion of regulated exons in Ubx transcripts, leading to isoforms Ia/b and IIa/b. In Drosophila pseudoobscura pseudoobscura (Fruit fly), this protein is Protein virilizer (vir).